The chain runs to 286 residues: Structure-specific endonuclease subunit SLX1 (286 aa).

In terms of domain architecture, GIY-YIG spans 15 to 98 (SFYGVYILKS…QHAYQTRHIN (84 aa)).

Belongs to the SLX1 family. In terms of assembly, forms a heterodimer with SLX4. The cofactor is a divalent metal cation.

The protein localises to the nucleus. Its function is as follows. Catalytic subunit of the SLX1-SLX4 structure-specific endonuclease that resolves DNA secondary structures generated during DNA repair and recombination. Has endonuclease activity towards branched DNA substrates, introducing single-strand cuts in duplex DNA close to junctions with ss-DNA. The chain is Structure-specific endonuclease subunit SLX1 from Candida dubliniensis (strain CD36 / ATCC MYA-646 / CBS 7987 / NCPF 3949 / NRRL Y-17841) (Yeast).